Reading from the N-terminus, the 119-residue chain is Large ribosomal subunit protein uL18 (119 aa).

Belongs to the universal ribosomal protein uL18 family. Part of the 50S ribosomal subunit; part of the 5S rRNA/L5/L18/L25 subcomplex. Contacts the 5S and 23S rRNAs.

In terms of biological role, this is one of the proteins that bind and probably mediate the attachment of the 5S RNA into the large ribosomal subunit, where it forms part of the central protuberance. This chain is Large ribosomal subunit protein uL18, found in Cupriavidus necator (strain ATCC 17699 / DSM 428 / KCTC 22496 / NCIMB 10442 / H16 / Stanier 337) (Ralstonia eutropha).